The chain runs to 94 residues: Pyrimidine/purine nucleoside phosphorylase (94 aa).

It belongs to the nucleoside phosphorylase PpnP family.

It catalyses the reaction a purine D-ribonucleoside + phosphate = a purine nucleobase + alpha-D-ribose 1-phosphate. The enzyme catalyses adenosine + phosphate = alpha-D-ribose 1-phosphate + adenine. The catalysed reaction is cytidine + phosphate = cytosine + alpha-D-ribose 1-phosphate. It carries out the reaction guanosine + phosphate = alpha-D-ribose 1-phosphate + guanine. It catalyses the reaction inosine + phosphate = alpha-D-ribose 1-phosphate + hypoxanthine. The enzyme catalyses thymidine + phosphate = 2-deoxy-alpha-D-ribose 1-phosphate + thymine. The catalysed reaction is uridine + phosphate = alpha-D-ribose 1-phosphate + uracil. It carries out the reaction xanthosine + phosphate = alpha-D-ribose 1-phosphate + xanthine. In terms of biological role, catalyzes the phosphorolysis of diverse nucleosides, yielding D-ribose 1-phosphate and the respective free bases. Can use uridine, adenosine, guanosine, cytidine, thymidine, inosine and xanthosine as substrates. Also catalyzes the reverse reactions. This is Pyrimidine/purine nucleoside phosphorylase from Salmonella typhimurium (strain LT2 / SGSC1412 / ATCC 700720).